A 731-amino-acid chain; its full sequence is MPPKDGKSAKKKGGISKAEKERLQREEEEKRQREAEEARLIAEREENERLERERIEQEKQHILELKDRERREDELNELRHILDENHFAVTVWEAECREKSKWERYMLCDGSPDPSVQPEINTYISLWRDDSENQIQKVLEECALTLELEKELEFLLGDGPEPSIAEQYQETLLSLQNLIHYKLNQATEELLKFANYNSDIDTGNMQTVVKDSNITLCLWANLNKNPRFKGYKFEEVGLGFELPKPLAVIEVAVRILHTRYDHLSHHSEREQLQKRRSMMEAILTQNTESSAAVHNGKMEGERDESESSKQVDECHSVRSESRKRSAVSVISAKEGRKSSSIKLLEEGESQMEEITTTLEADQHDPYPSPAEPVTDTDVHIVDLQQFTPLGGVFYFDLFHMPPQSRTVKGWEMRELLDTGLQVFPYPTEQSRIQSSTSVKLDEHSNTTVASLPVGVTVALPHSVLFLEDPQVARWDPIGQHWRTDCISETSYDAELRTISFQMTAFYAFTLLQETYANMPFQSWELRPLGQDSALFTITGALIEVSITVKGKQCMLHTEETKDLDRLLGKWMSPSELQKAMRKAGINIFVNEYSDKYVSINLKDPLIEHAVYEQMALMSSAVAFSWSRWNAQCRQEHLVLQACEQLEVGPVAEKAWSLYLLGAQRNQHLKMKEQEDSFSPELAEGSEFHSTFLHMLRQDLSTEGQARVRQSHHLYIDTVQRLLCATRVLTYS.

Disordered stretches follow at residues 1–50 and 285–320; these read MPPK…NERL and QNTE…VRSE. 2 stretches are compositionally biased toward basic and acidic residues: residues 17–50 and 296–320; these read KAEK…NERL and GKME…VRSE.

It belongs to the DNAI7 family. In terms of assembly, part of the multisubunit axonemal dynein complex formed at least of two heavy chains and a number of intermediate and light chains.

The protein resides in the cell projection. It localises to the cilium. It is found in the cytoplasm. In terms of biological role, via its association with the multisubunit axonemal dynein complex, may be potentially involved in the regulation of cilia function. The chain is Dynein axonemal intermediate chain 7 (dnai7) from Danio rerio (Zebrafish).